The primary structure comprises 264 residues: Thymidylate synthase (264 aa).

A dUMP-binding site is contributed by Arg-21. His-51 is a binding site for (6R)-5,10-methylene-5,6,7,8-tetrahydrofolate. 126–127 (RR) provides a ligand contact to dUMP. The active-site Nucleophile is Cys-146. DUMP-binding positions include 166-169 (RSAD), Asn-177, and 207-209 (HIY). Asp-169 provides a ligand contact to (6R)-5,10-methylene-5,6,7,8-tetrahydrofolate. Position 263 (Ala-263) interacts with (6R)-5,10-methylene-5,6,7,8-tetrahydrofolate.

It belongs to the thymidylate synthase family. Bacterial-type ThyA subfamily. As to quaternary structure, homodimer.

The protein localises to the cytoplasm. It catalyses the reaction dUMP + (6R)-5,10-methylene-5,6,7,8-tetrahydrofolate = 7,8-dihydrofolate + dTMP. Its pathway is pyrimidine metabolism; dTTP biosynthesis. In terms of biological role, catalyzes the reductive methylation of 2'-deoxyuridine-5'-monophosphate (dUMP) to 2'-deoxythymidine-5'-monophosphate (dTMP) while utilizing 5,10-methylenetetrahydrofolate (mTHF) as the methyl donor and reductant in the reaction, yielding dihydrofolate (DHF) as a by-product. This enzymatic reaction provides an intracellular de novo source of dTMP, an essential precursor for DNA biosynthesis. This Methylobacillus flagellatus (strain ATCC 51484 / DSM 6875 / VKM B-1610 / KT) protein is Thymidylate synthase.